Here is a 208-residue protein sequence, read N- to C-terminus: Small ribosomal subunit protein uS4 (208 aa).

Residues 98 to 159 (LRLDNVAYRL…AARTHIRIAA (62 aa)) form the S4 RNA-binding domain.

Belongs to the universal ribosomal protein uS4 family. Part of the 30S ribosomal subunit. Contacts protein S5. The interaction surface between S4 and S5 is involved in control of translational fidelity.

Functionally, one of the primary rRNA binding proteins, it binds directly to 16S rRNA where it nucleates assembly of the body of the 30S subunit. With S5 and S12 plays an important role in translational accuracy. The chain is Small ribosomal subunit protein uS4 from Acidithiobacillus ferrooxidans (strain ATCC 23270 / DSM 14882 / CIP 104768 / NCIMB 8455) (Ferrobacillus ferrooxidans (strain ATCC 23270)).